The following is a 53-amino-acid chain: Large ribosomal subunit protein eL40 (53 aa).

This sequence belongs to the eukaryotic ribosomal protein eL40 family.

In Pyrobaculum aerophilum (strain ATCC 51768 / DSM 7523 / JCM 9630 / CIP 104966 / NBRC 100827 / IM2), this protein is Large ribosomal subunit protein eL40.